A 405-amino-acid chain; its full sequence is Diaminohydroxyphosphoribosylamino-pyrimidine deaminase (405 aa).

One can recognise a CMP/dCMP-type deaminase domain in the interval 256-383; the sequence is YNHEEYMLKA…DLLKKAGIVV (128 aa). Zn(2+) is bound at residue histidine 305. Glutamate 307 functions as the Proton donor in the catalytic mechanism. 2 residues coordinate Zn(2+): cysteine 335 and cysteine 345.

This sequence belongs to the cytidine and deoxycytidylate deaminase family. Zn(2+) serves as cofactor.

The protein localises to the cytoplasm. It localises to the nucleus. It catalyses the reaction 2,5-diamino-6-hydroxy-4-(5-phosphoribosylamino)-pyrimidine + H2O + H(+) = 5-amino-6-(5-phospho-D-ribosylamino)uracil + NH4(+). It functions in the pathway cofactor biosynthesis; riboflavin biosynthesis; 5-amino-6-(D-ribitylamino)uracil from GTP: step 2/4. Its function is as follows. Involved in riboflavin biosynthesis. Converts 2,5-diamino-6-(ribosylamino)-4(3H)-pyrimidinone 5'-phosphate into 5-amino-6-(ribosylamino)-2,4(1H,3H)-pyrimidinedione 5'-phosphate. This is Diaminohydroxyphosphoribosylamino-pyrimidine deaminase from Schizosaccharomyces pombe (strain 972 / ATCC 24843) (Fission yeast).